The sequence spans 288 residues: MSYQPQTEAATSRFLNVDEGGRTLRIHINDCGDGKETVVMLHGSGPGATGWANFSRNIDPLVEAGYRVLLLDCPGWGKSDAIVNSGSRSDLNARILKSVVDQLGIDKVHLLGNLMGGHSAVAFTLSWPERVAKLVLMGGGTGGMSLFTPMPTEGIKLLNALYREPTIENLKKMMSIFVFDTRDLTEALFEARLNNMLSRRDHLDNFVKSLEANPKQFPDFGPRLGEISAPTLIVWGRNDRFVPMDAGLRLLAGIAGSELHIYRDCGHWAQWEHADSFNQLVLNFLARA.

His-267 (proton acceptor) is an active-site residue.

The protein belongs to the AB hydrolase superfamily. MhpC family. In terms of assembly, homodimer.

The catalysed reaction is (2Z,4E)-2-hydroxy-6-oxonona-2,4-dienedioate + H2O = (2Z)-2-hydroxypenta-2,4-dienoate + succinate + H(+). It carries out the reaction (2Z,4E,7E)-2-hydroxy-6-oxonona-2,4,7-trienedioate + H2O = (2Z)-2-hydroxypenta-2,4-dienoate + fumarate + H(+). Its pathway is aromatic compound metabolism; 3-phenylpropanoate degradation. Functionally, catalyzes the cleavage of the C5-C6 bond of 2-hydroxy-6-oxononadienedioate and 2-hydroxy-6-oxononatrienedioate, a dienol ring fission product of the bacterial meta-cleavage pathway for degradation of phenylpropionic acid. The protein is 2-hydroxy-6-oxononadienedioate/2-hydroxy-6-oxononatrienedioate hydrolase of Klebsiella pneumoniae subsp. pneumoniae (strain ATCC 700721 / MGH 78578).